A 714-amino-acid chain; its full sequence is Forkhead box protein P2 (714 aa).

Positions 1 to 28 (MMQESATETISNSSMNQNGMSTLSSQLD) are enriched in polar residues. Disordered stretches follow at residues 1 to 45 (MMQE…SEVS) and 284 to 338 (KHGG…TGAS). Residues 291–304 (TTNNSSSTTSSTTS) are compositionally biased toward low complexity. Over residues 314–323 (SIVNGQSSVL) the composition is skewed to polar residues. The segment covering 325 to 336 (ARRDSSSHEETG) has biased composition (basic and acidic residues). The C2H2-type zinc finger occupies 345 to 370 (GVCKWPGCESICEDFGQFLKHLNNEH). Positions 387 to 408 (VQQLEIQLSKERERLQAMMTHL) are leucine-zipper. Residues 421–425 (PLNLV) form a CTBP1-binding region. The span at 437–458 (TSPQSLPQTPTTPTAPVTPITQ) shows a compositional bias: low complexity. The disordered stretch occupies residues 437–464 (TSPQSLPQTPTTPTAPVTPITQGPSVIT). The segment at residues 503–593 (RPPFTYATLI…SQKITGSPTL (91 aa)) is a DNA-binding region (fork-head). Disordered regions lie at residues 648 to 667 (LDHI…QPHI) and 677 to 714 (VIAE…EDLE). Over residues 698–714 (LEDDREIEEEPLSEDLE) the composition is skewed to acidic residues.

Forms homodimers and heterodimers with FOXP1 and FOXP4. Dimerization is required for DNA-binding. Interacts with CTBP1. Interacts with FOXP1. Interacts with TBR1. Interacts with ZMYM2.

Its subcellular location is the nucleus. In terms of biological role, transcriptional repressor that may play a role in the specification and differentiation of lung epithelium. May also play a role in developing neural, gastrointestinal and cardiovascular tissues. Can act with CTBP1 to synergistically repress transcription but CTPBP1 is not essential. Plays a role in synapse formation by regulating SRPX2 levels. The sequence is that of Forkhead box protein P2 (FOXP2) from Macaca mulatta (Rhesus macaque).